The sequence spans 181 residues: Probable integrase/recombinase YoeC (181 aa).

The 174-residue stretch at 3–176 folds into the Tyr recombinase domain; the sequence is IVQPIRSLEK…DEDTTRAAYK (174 aa). Catalysis depends on residues R40, K64, H128, R131, and H154. Catalysis depends on Y163, which acts as the O-(3'-phospho-DNA)-tyrosine intermediate.

It belongs to the 'phage' integrase family.

This chain is Probable integrase/recombinase YoeC (yoeC), found in Bacillus subtilis (strain 168).